The sequence spans 297 residues: N-acetylmuramic acid 6-phosphate etherase (297 aa).

One can recognise an SIS domain in the interval 55–218 (ATDALKSGGR…STGAMVKFGK (164 aa)). The active-site Proton donor is Glu-83. Glu-114 is a catalytic residue.

Belongs to the GCKR-like family. MurNAc-6-P etherase subfamily. In terms of assembly, homodimer.

It carries out the reaction N-acetyl-D-muramate 6-phosphate + H2O = N-acetyl-D-glucosamine 6-phosphate + (R)-lactate. The protein operates within amino-sugar metabolism; 1,6-anhydro-N-acetylmuramate degradation. It functions in the pathway amino-sugar metabolism; N-acetylmuramate degradation. It participates in cell wall biogenesis; peptidoglycan recycling. Its function is as follows. Specifically catalyzes the cleavage of the D-lactyl ether substituent of MurNAc 6-phosphate, producing GlcNAc 6-phosphate and D-lactate. Together with AnmK, is also required for the utilization of anhydro-N-acetylmuramic acid (anhMurNAc) either imported from the medium or derived from its own cell wall murein, and thus plays a role in cell wall recycling. This chain is N-acetylmuramic acid 6-phosphate etherase, found in Enterobacter sp. (strain 638).